A 130-amino-acid chain; its full sequence is Iron-sulfur cluster insertion protein ErpA (130 aa).

Positions 46, 116, and 118 each coordinate iron-sulfur cluster.

The protein belongs to the HesB/IscA family. As to quaternary structure, homodimer. Iron-sulfur cluster serves as cofactor.

Functionally, required for insertion of 4Fe-4S clusters for at least IspG. In Legionella pneumophila subsp. pneumophila (strain Philadelphia 1 / ATCC 33152 / DSM 7513), this protein is Iron-sulfur cluster insertion protein ErpA.